Here is a 701-residue protein sequence, read N- to C-terminus: A-type ATP synthase subunit I (701 aa).

A run of 10 helical transmembrane segments spans residues 340-360, 363-379, 388-408, 435-455, 468-488, 498-518, 555-575, 583-603, 612-632, and 649-669; these read WEIS…GLMF, FGNA…FYRY, IPKL…TGLL, LYNL…LLPF, MIFS…LGVI, FLFL…FIFM, GIVW…AILV, WGSA…LLLL, VLVF…MAYL, and IIIL…VVFI.

The protein belongs to the V-ATPase 116 kDa subunit family. Has multiple subunits with at least A(3), B(3), C, D, E, F, H, I and proteolipid K(x).

The protein localises to the cell membrane. Functionally, component of the A-type ATP synthase that produces ATP from ADP in the presence of a proton gradient across the membrane. The chain is A-type ATP synthase subunit I from Saccharolobus solfataricus (strain ATCC 35092 / DSM 1617 / JCM 11322 / P2) (Sulfolobus solfataricus).